Here is a 451-residue protein sequence, read N- to C-terminus: Trigger factor (451 aa).

Residues 170-256 (DHIATIDYCE…LTALKYKDLP (87 aa)) form the PPIase FKBP-type domain.

The protein belongs to the FKBP-type PPIase family. Tig subfamily.

The protein resides in the cytoplasm. The catalysed reaction is [protein]-peptidylproline (omega=180) = [protein]-peptidylproline (omega=0). In terms of biological role, involved in protein export. Acts as a chaperone by maintaining the newly synthesized protein in an open conformation. Functions as a peptidyl-prolyl cis-trans isomerase. The polypeptide is Trigger factor (Treponema denticola (strain ATCC 35405 / DSM 14222 / CIP 103919 / JCM 8153 / KCTC 15104)).